A 507-amino-acid polypeptide reads, in one-letter code: ATP synthase subunit alpha, chloroplastic (507 aa).

170–177 is a binding site for ATP; it reads GDRQTGKT.

Belongs to the ATPase alpha/beta chains family. As to quaternary structure, F-type ATPases have 2 components, CF(1) - the catalytic core - and CF(0) - the membrane proton channel. CF(1) has five subunits: alpha(3), beta(3), gamma(1), delta(1), epsilon(1). CF(0) has four main subunits: a, b, b' and c.

The protein localises to the plastid. The protein resides in the chloroplast thylakoid membrane. The catalysed reaction is ATP + H2O + 4 H(+)(in) = ADP + phosphate + 5 H(+)(out). In terms of biological role, produces ATP from ADP in the presence of a proton gradient across the membrane. The alpha chain is a regulatory subunit. In Nymphaea alba (White water-lily), this protein is ATP synthase subunit alpha, chloroplastic.